The chain runs to 351 residues: Outer membrane porin PhoE (351 aa).

The first 21 residues, 1–21 (MKKSTLALVVMGITASASVQA), serve as a signal peptide directing secretion.

The protein belongs to the Gram-negative porin family. Homotrimer.

The protein resides in the cell outer membrane. Uptake of inorganic phosphate, phosphorylated compounds, and some other negatively charged solutes. This is Outer membrane porin PhoE (phoE) from Citrobacter freundii.